Here is a 235-residue protein sequence, read N- to C-terminus: Peroxynitrite isomerase 2 (235 aa).

The short motif at 82–88 (GVWRGEG) is the GXWXGXG element. Residues K198 and H225 each coordinate heme b.

This sequence belongs to the nitrobindin family. Homodimer. Heme b is required as a cofactor.

The enzyme catalyses peroxynitrite = nitrate. It functions in the pathway nitrogen metabolism. Its function is as follows. Heme-binding protein able to scavenge peroxynitrite and to protect free L-tyrosine against peroxynitrite-mediated nitration, by acting as a peroxynitrite isomerase that converts peroxynitrite to nitrate. Therefore, this protein likely plays a role in peroxynitrite sensing and in the detoxification of reactive nitrogen and oxygen species (RNS and ROS, respectively). Is able to bind nitric oxide (NO) in vitro, but may act as a sensor of peroxynitrite levels in vivo. This Mycolicibacterium paratuberculosis (strain ATCC BAA-968 / K-10) (Mycobacterium paratuberculosis) protein is Peroxynitrite isomerase 2.